Here is a 244-residue protein sequence, read N- to C-terminus: 3-oxoacyl-[acyl-carrier-protein] reductase FabG (244 aa).

Residues 12–15 (GASR), T37, 59–60 (NV), and N86 contribute to the NADP(+) site. S138 serves as a coordination point for substrate. Y151 serves as the catalytic Proton acceptor. NADP(+)-binding positions include 151–155 (YAAAK) and I184.

This sequence belongs to the short-chain dehydrogenases/reductases (SDR) family. In terms of assembly, homotetramer.

The catalysed reaction is a (3R)-hydroxyacyl-[ACP] + NADP(+) = a 3-oxoacyl-[ACP] + NADPH + H(+). It participates in lipid metabolism; fatty acid biosynthesis. Functionally, catalyzes the NADPH-dependent reduction of beta-ketoacyl-ACP substrates to beta-hydroxyacyl-ACP products, the first reductive step in the elongation cycle of fatty acid biosynthesis. This Vibrio harveyi (Beneckea harveyi) protein is 3-oxoacyl-[acyl-carrier-protein] reductase FabG (fabG).